A 114-amino-acid polypeptide reads, in one-letter code: Large ribosomal subunit protein bL17 (114 aa).

This sequence belongs to the bacterial ribosomal protein bL17 family. Part of the 50S ribosomal subunit. Contacts protein L32.

This chain is Large ribosomal subunit protein bL17, found in Clostridium acetobutylicum (strain ATCC 824 / DSM 792 / JCM 1419 / IAM 19013 / LMG 5710 / NBRC 13948 / NRRL B-527 / VKM B-1787 / 2291 / W).